Reading from the N-terminus, the 859-residue chain is Magnesium transporter ALR1 (859 aa).

Over residues 1-20 the composition is skewed to low complexity; it reads MSSSSSSSESSPNLSRSNSL. 2 disordered regions span residues 1-281 and 330-399; these read MSSS…MPPQ and TSST…NIPS. The residue at position 2 (serine 2) is an N-acetylserine. Composition is skewed to basic and acidic residues over residues 28–42 and 55–73; these read KTED…RQHP and KNKE…EQKS. Tyrosine 77 is subject to Phosphotyrosine. Serine 85 carries the post-translational modification Phosphoserine. Over residues 144-154 the composition is skewed to basic and acidic residues; sequence PPKDVGVKRDY. Residues 157-176 are compositionally biased toward low complexity; that stretch reads SSSTASSGNKSKLSASSSAS. Residues serine 185 and serine 188 each carry the phosphoserine modification. Basic and acidic residues predominate over residues 193–203; that stretch reads IPHESKSDTHS. The segment covering 213–235 has biased composition (polar residues); it reads YSTTSAHSSINPAVLLTKSTSQK. Phosphoserine occurs at positions 220, 221, and 236. A Phosphothreonine modification is found at threonine 242. Polar residues predominate over residues 252 to 265; sequence TRASFDSDVSQASR. The span at 330 to 339 shows a compositional bias: low complexity; it reads TSSTSTSGSS. Over residues 353–375 the composition is skewed to basic and acidic residues; the sequence is EKSESTNETEIHEKKEDEHEKIK. A run of 2 helical transmembrane segments spans residues 744 to 764 and 773 to 793; these read TMIG…GMNV and IAWW…GWFL. The interval 830 to 859 is disordered; that stretch reads FNDRSKNINVRAGPSNKSVASLPSRYSRYD. Serine 850 is subject to Phosphoserine.

The protein belongs to the CorA metal ion transporter (MIT) (TC 1.A.35) family.

It localises to the cell membrane. Plasma membrane magnesium transporter. The polypeptide is Magnesium transporter ALR1 (ALR1) (Saccharomyces cerevisiae (strain ATCC 204508 / S288c) (Baker's yeast)).